A 419-amino-acid polypeptide reads, in one-letter code: Carbohydrate sulfotransferase 12 (419 aa).

At 1-5 (MTKPR) the chain is on the cytoplasmic side. Residues 6-26 (LFRLWLVLGSALMILLIIVYW) form a helical; Signal-anchor for type II membrane protein membrane-spanning segment. Residues 27–419 (DNVGTAHFYL…YPKPENLLRD (393 aa)) are Lumenal-facing. Basic and acidic residues predominate over residues 78–87 (HNDLSRRKTE). A disordered region spans residues 78–99 (HNDLSRRKTEQPPVPAPSKPVL). Asn-139 carries an N-linked (GlcNAc...) asparagine glycan. 176-182 (PKVACTN) provides a ligand contact to 3'-phosphoadenylyl sulfate. Asn-214 carries an N-linked (GlcNAc...) asparagine glycan. 250–258 (RDPFVRLIS) is a binding site for 3'-phosphoadenylyl sulfate. N-linked (GlcNAc...) asparagine glycans are attached at residues Asn-285 and Asn-375.

It belongs to the sulfotransferase 2 family.

Its subcellular location is the golgi apparatus membrane. The enzyme catalyses chondroitin beta-D-glucuronate + n 3'-phosphoadenylyl sulfate = chondroitin 4'-sulfate + n adenosine 3',5'-bisphosphate + n H(+). Functionally, catalyzes the transfer of sulfate to position 4 of the N-acetylgalactosamine (GalNAc) residue of chondroitin and desulfated dermatan sulfate. Chondroitin sulfate constitutes the predominant proteoglycan present in cartilage and is distributed on the surfaces of many cells and extracellular matrices. Activity toward partially desulfated dermatan sulfate is however lower. Does not form 4, 6-di-O-sulfated GalNAc when chondroitin sulfate C is used as an acceptor. This Mus musculus (Mouse) protein is Carbohydrate sulfotransferase 12 (Chst12).